An 831-amino-acid polypeptide reads, in one-letter code: Prolactin receptor (831 aa).

A signal peptide spans 1-23; the sequence is MKQDLISSVQIILFLPLTTVGLA. The Extracellular portion of the chain corresponds to 24-438; the sequence is GQSFPGKPKI…QIPNDFRVKD (415 aa). Fibronectin type-III domains are found at residues 30–128, 129–227, 230–331, and 332–433; these read KPKI…VQPG, SPVN…IPSG, PPEK…VQPD, and PPVN…IPND. Cysteine 36 and cysteine 46 are oxidised to a cystine. A glycan (N-linked (GlcNAc...) asparagine) is linked at asparagine 59. Cysteine 75 and cysteine 86 are oxidised to a cystine. N-linked (GlcNAc...) asparagine glycans are attached at residues asparagine 91, asparagine 100, asparagine 112, asparagine 132, asparagine 262, asparagine 303, asparagine 315, and asparagine 335. Zn(2+) contacts are provided by aspartate 414 and histidine 416. The short motif at 419–423 is the WSXWS motif element; that stretch reads WSEWS. A helical membrane pass occupies residues 439 to 459; that stretch reads MIVWIVLGVLSSLICLIMSWT. Topologically, residues 460 to 831 are cytoplasmic; the sequence is MVLKGYRMIT…DPSSFMPSFK (372 aa). Residues 471-479 carry the Box 1 motif motif; it reads MLPPVPGPK. Disordered stretches follow at residues 527–563, 774–796, and 808–831; these read QQLMPSHDNGHPSKNAKITRKETDSDSGRGSCDSPSL, RVPHTPASQEPAKETSQSLQQGQ, and PSDCKRETGGSEYMDPSSFMPSFK. Residues 787 to 796 are compositionally biased toward polar residues; it reads ETSQSLQQGQ.

This sequence belongs to the type I cytokine receptor family. Type 1 subfamily.

The protein localises to the membrane. Functionally, this is a receptor for the anterior pituitary hormone prolactin. The protein is Prolactin receptor (PRLR) of Gallus gallus (Chicken).